A 401-amino-acid chain; its full sequence is L-rhamnonate dehydratase (401 aa).

Substrate contacts are provided by H29 and R55. Positions 222, 248, and 276 each coordinate Mg(2+). Residue H325 is the Proton acceptor of the active site. A substrate-binding site is contributed by E345.

This sequence belongs to the mandelate racemase/muconate lactonizing enzyme family. RhamD subfamily. As to quaternary structure, homooctamer; tetramer of dimers. Requires Mg(2+) as cofactor.

The enzyme catalyses L-rhamnonate = 2-dehydro-3-deoxy-L-rhamnonate + H2O. In terms of biological role, catalyzes the dehydration of L-rhamnonate to 2-keto-3-deoxy-L-rhamnonate (KDR). This chain is L-rhamnonate dehydratase, found in Klebsiella pneumoniae (strain 342).